A 150-amino-acid polypeptide reads, in one-letter code: Large ribosomal subunit protein bL9 (150 aa).

Belongs to the bacterial ribosomal protein bL9 family.

Its function is as follows. Binds to the 23S rRNA. This is Large ribosomal subunit protein bL9 from Cupriavidus metallidurans (strain ATCC 43123 / DSM 2839 / NBRC 102507 / CH34) (Ralstonia metallidurans).